The chain runs to 163 residues: Small heat shock protein C1 (163 aa).

The 109-residue stretch at 55-163 (TFYESSSLKS…EQDSREITIN (109 aa)) folds into the sHSP domain.

The protein belongs to the small heat shock protein (HSP20) family.

In Rickettsia prowazekii (strain Madrid E), this protein is Small heat shock protein C1 (hspC1).